Consider the following 277-residue polypeptide: Cis-3,4-dihydrophenanthrene-3,4-diol dehydrogenase (277 aa).

NAD(+) contacts are provided by residues 10–37 and aspartate 60; that span reads FLTG…TVLD. Position 143 (serine 143) interacts with substrate. The Proton acceptor role is filled by tyrosine 156. Lysine 160 contributes to the NAD(+) binding site.

Belongs to the short-chain dehydrogenases/reductases (SDR) family. Homotetramer.

The enzyme catalyses (3S,4R)-3,4-dihydrophenanthrene-3,4-diol + NAD(+) = phenanthrene-3,4-diol + NADH + H(+). Inhibited by heavy metal such as Hg(2+) and by p-chloromercuribenzoate. Functionally, involved in the degradation of phenanthrene. Catalyzes the oxidation of cis-phenanthrene dihydrodiol (PDD) to yield phenanthrenediol. It can use either NAD or NADP as electron acceptor, however NAD is preferred to NADP. The sequence is that of Cis-3,4-dihydrophenanthrene-3,4-diol dehydrogenase (phnB) from Alcaligenes faecalis.